The chain runs to 685 residues: Twinkle mtDNA helicase (685 aa).

Residues 1–31 (MWLLLRRAYPLRILLPLRGEWVGRRGLPRSL) constitute a mitochondrion transit peptide. Residues 1–122 (MWLLLRRAYP…LCMTSLAEGS (122 aa)) form a contributes to single strand DNA binding activity region. The segment at 54 to 214 (PVTTTEIRQY…LVFPWFTPGS (161 aa)) is N-terminal region (NTR). The tract at residues 122-373 (SWEDLQASVE…WHKSIVSFRQ (252 aa)) is required for hexamers formation and DNA helicase activity. Positions 215 to 335 (SGLRGLKLLG…LNPKRCSLVR (121 aa)) are primase-like domain. An SF4 helicase domain is found at 385 to 636 (VEQAAGVRWS…LTFSIPPKSK (252 aa)). Residues 406-591 (HRKGELTVFT…QEADNVLILQ (186 aa)) are maybe required for stable oligomeric structure. An ATP-binding site is contributed by 416 to 423 (GPTGSGKT). Residues 454–482 (RVMLTQFAVTRLEEQLDKYEEWADRFEDL) are a coiled coil. The might negatively regulate ATPase activity stretch occupies residues 641 to 685 (KIKDDNGLVAKKSSSGKKGAAHQNPEICLGQDPSPAQPDTSKSSG). Residues 642–685 (IKDDNGLVAKKSSSGKKGAAHQNPEICLGQDPSPAQPDTSKSSG) form a disordered region.

In terms of assembly, homohexamer (via C-terminus), which assembles in a ring-like structure. Homoheptamer, which assembles in a ring-like structure. Homooctamer, which assembles in a ring-like structure. Oligomers may sequentially eject two monomers (octamer&gt;heptamer&gt;hexamer) upon DNA binding. Oligomerization is Mg(2+), nucleotide and DNA-independent, however, Mg(2+) and nucleotide stabilize the homohexameric form. Interacts with POLG in vitro. Interacts with LONP1. As to expression, ubiquitous with the highest levels in the liver, heart and kidneys. The skeletal muscle, brain and testis showed lower but detectable expression. Expression is coregulated with MRPL43.

It is found in the mitochondrion matrix. Its subcellular location is the mitochondrion nucleoid. It localises to the mitochondrion inner membrane. The catalysed reaction is ATP + H2O = ADP + phosphate + H(+). It carries out the reaction Couples ATP hydrolysis with the unwinding of duplex DNA at the replication fork by translocating in the 5'-3' direction. This creates two antiparallel DNA single strands (ssDNA). The leading ssDNA polymer is the template for DNA polymerase III holoenzyme which synthesizes a continuous strand.. Functionally, mitochondrial helicase involved in mtDNA replication and repair. Might have a role in mtDNA repair. Has DNA strand separation activity needed to form a processive replication fork for leading strand synthesis which is catalyzed by the formation of a replisome complex with POLG and mtSDB. Preferentially unwinds DNA substrates with pre-existing 5'-and 3'- single-stranded tails but is also active on a 5'- flap substrate. Can dissociate the invading strand of immobile or mobile D-loop DNA structures irrespective of the single strand polarity of the third strand. In addition to its DNA strand separation activity, also has DNA strand annealing, DNA strand-exchange and DNA branch migration activities. This Mus musculus (Mouse) protein is Twinkle mtDNA helicase.